Consider the following 333-residue polypeptide: Protoheme IX farnesyltransferase (333 aa).

A run of 7 helical transmembrane segments spans residues 63 to 83, 109 to 129, 132 to 152, 160 to 180, 188 to 208, 245 to 265, and 292 to 312; these read LACTLGGGALAAAAAGVLNCI, AAFIGAISCTLAAAALLVSGV, LAAGLSLLGLCSYVLLYTAIL, IVIGGVAGAIPPLVGAAAASG, WLFALVMLWTPAHFWALALLL, GFGVWALPEGGLLYGLLLIPF, and WSIFYMFGICLLLVVSRLPMA.

This sequence belongs to the UbiA prenyltransferase family. Protoheme IX farnesyltransferase subfamily.

Its subcellular location is the cell inner membrane. It carries out the reaction heme b + (2E,6E)-farnesyl diphosphate + H2O = Fe(II)-heme o + diphosphate. The protein operates within porphyrin-containing compound metabolism; heme O biosynthesis; heme O from protoheme: step 1/1. Converts heme B (protoheme IX) to heme O by substitution of the vinyl group on carbon 2 of heme B porphyrin ring with a hydroxyethyl farnesyl side group. This is Protoheme IX farnesyltransferase from Prochlorococcus marinus (strain MIT 9303).